The primary structure comprises 490 residues: Glutamyl-tRNA(Gln) amidotransferase subunit A (490 aa).

Catalysis depends on charge relay system residues Lys78 and Ser153. The active-site Acyl-ester intermediate is Ser177.

Belongs to the amidase family. GatA subfamily. Heterotrimer of A, B and C subunits.

The catalysed reaction is L-glutamyl-tRNA(Gln) + L-glutamine + ATP + H2O = L-glutaminyl-tRNA(Gln) + L-glutamate + ADP + phosphate + H(+). In terms of biological role, allows the formation of correctly charged Gln-tRNA(Gln) through the transamidation of misacylated Glu-tRNA(Gln) in organisms which lack glutaminyl-tRNA synthetase. The reaction takes place in the presence of glutamine and ATP through an activated gamma-phospho-Glu-tRNA(Gln). In Desulforapulum autotrophicum (strain ATCC 43914 / DSM 3382 / VKM B-1955 / HRM2) (Desulfobacterium autotrophicum), this protein is Glutamyl-tRNA(Gln) amidotransferase subunit A.